Here is a 318-residue protein sequence, read N- to C-terminus: Mevalonate 3-kinase (318 aa).

Substrate is bound at residue Leu-19. Residues 96–100 (YSSQN) and 105–108 (SGSS) each bind ATP. The substrate site is built by Glu-140 and Arg-144. ATP contacts are provided by Arg-185 and Ser-188.

It belongs to the GHMP kinase family. In terms of assembly, homodimer.

The enzyme catalyses (R)-mevalonate + ATP = (R)-3-phosphomevalonate + ADP + H(+). Its pathway is isoprenoid biosynthesis; isopentenyl diphosphate biosynthesis via mevalonate pathway. Its function is as follows. Catalyzes the phosphorylation of mevalonate (MVA) to yield mevalonate-3-phosphate. Functions in an alternative mevalonate pathway, only present in extreme acidophiles of the Thermoplasmatales order, which passes through mevalonate 3-phosphate rather than mevalonate 5-phosphate. This is Mevalonate 3-kinase from Thermoplasma acidophilum (strain ATCC 25905 / DSM 1728 / JCM 9062 / NBRC 15155 / AMRC-C165).